The following is a 562-amino-acid chain: Potassium-transporting ATPase potassium-binding subunit (562 aa).

The next 12 helical transmembrane spans lie at 5–25 (AFLL…PLGS), 63–83 (AAAI…LLMA), 132–152 (GLTV…FALI), 175–195 (LYVL…QGVL), 250–270 (LSNI…CFAF), 279–299 (QGHA…AVVM), 327–347 (FGVL…TGAV), 356–376 (ALGG…FGGV), 379–399 (GLYG…LMIG), 416–436 (MTAL…ALAL), 483–503 (VLLA…VLAI), and 526–546 (LFIG…FIPA).

It belongs to the KdpA family. As to quaternary structure, the system is composed of three essential subunits: KdpA, KdpB and KdpC.

It is found in the cell inner membrane. In terms of biological role, part of the high-affinity ATP-driven potassium transport (or Kdp) system, which catalyzes the hydrolysis of ATP coupled with the electrogenic transport of potassium into the cytoplasm. This subunit binds the periplasmic potassium ions and delivers the ions to the membrane domain of KdpB through an intramembrane tunnel. The polypeptide is Potassium-transporting ATPase potassium-binding subunit (Pectobacterium carotovorum subsp. carotovorum (strain PC1)).